The chain runs to 270 residues: MPELPEVETTRRGIAPHLEGQRVSRVVVRDRRLRWPIPEDLDVRLSGQRIVSVERRAKYLLINAEVGTLISHLGMSGNLRLVELGLPAAKHEHVDIELESGLMLRYTDPRRFGAMLWSLDPLNHELLLRLGPEPLTDLFDGERLFQLSRGRSMAVKPFIMDNAVVVGVGNIYATEALFAAGIDPRREAGGISRARYLKLAIEIKRVLAAAIEQGGTTLRDFIGGDGQPGYFQQELFVYGRGGQPCKVCGTALREVKLGQRASVYCPRCQR.

The Schiff-base intermediate with DNA role is filled by Pro-2. The active-site Proton donor is Glu-3. Lys-58 functions as the Proton donor; for beta-elimination activity in the catalytic mechanism. His-91, Arg-110, and Arg-151 together coordinate DNA. The FPG-type zinc finger occupies 236 to 270 (FVYGRGGQPCKVCGTALREVKLGQRASVYCPRCQR). The Proton donor; for delta-elimination activity role is filled by Arg-260.

The protein belongs to the FPG family. In terms of assembly, monomer. Zn(2+) is required as a cofactor.

The enzyme catalyses Hydrolysis of DNA containing ring-opened 7-methylguanine residues, releasing 2,6-diamino-4-hydroxy-5-(N-methyl)formamidopyrimidine.. The catalysed reaction is 2'-deoxyribonucleotide-(2'-deoxyribose 5'-phosphate)-2'-deoxyribonucleotide-DNA = a 3'-end 2'-deoxyribonucleotide-(2,3-dehydro-2,3-deoxyribose 5'-phosphate)-DNA + a 5'-end 5'-phospho-2'-deoxyribonucleoside-DNA + H(+). Functionally, involved in base excision repair of DNA damaged by oxidation or by mutagenic agents. Acts as a DNA glycosylase that recognizes and removes damaged bases. Has a preference for oxidized purines, such as 7,8-dihydro-8-oxoguanine (8-oxoG). Has AP (apurinic/apyrimidinic) lyase activity and introduces nicks in the DNA strand. Cleaves the DNA backbone by beta-delta elimination to generate a single-strand break at the site of the removed base with both 3'- and 5'-phosphates. The polypeptide is Formamidopyrimidine-DNA glycosylase (Pseudomonas putida (strain GB-1)).